Consider the following 142-residue polypeptide: MGKYRKKAREIVFRTLYTYDIKGGDLFEIMEDHIKDIRGKLSKKTVDYIYSILKGIDEHLPEIDDILRENLKNWRLERLGYPERALLRLGVYELLFSDIEDKGRVFMDILDLTKCYIDNPDTVKFINGVLSTVYKNRQKVNQ.

It belongs to the NusB family.

Functionally, involved in transcription antitermination. Required for transcription of ribosomal RNA (rRNA) genes. Binds specifically to the boxA antiterminator sequence of the ribosomal RNA (rrn) operons. This chain is Transcription antitermination protein NusB, found in Persephonella marina (strain DSM 14350 / EX-H1).